The primary structure comprises 285 residues: tRNA pseudouridine synthase A (285 aa).

Catalysis depends on D64, which acts as the Nucleophile. Y125 is a substrate binding site.

The protein belongs to the tRNA pseudouridine synthase TruA family. Homodimer.

The catalysed reaction is uridine(38/39/40) in tRNA = pseudouridine(38/39/40) in tRNA. Its function is as follows. Formation of pseudouridine at positions 38, 39 and 40 in the anticodon stem and loop of transfer RNAs. This chain is tRNA pseudouridine synthase A, found in Streptomyces avermitilis (strain ATCC 31267 / DSM 46492 / JCM 5070 / NBRC 14893 / NCIMB 12804 / NRRL 8165 / MA-4680).